A 132-amino-acid polypeptide reads, in one-letter code: Protein LEKR1 (132 aa).

Residues 37–116 are a coiled coil; the sequence is FKAMEEKVKA…KKQLSHLQDE (80 aa).

In Homo sapiens (Human), this protein is Protein LEKR1 (LEKR1).